The primary structure comprises 113 residues: Hydrogenase maturation factor HypA (113 aa).

His-2 is a binding site for Ni(2+). 4 residues coordinate Zn(2+): Cys-73, Cys-76, Cys-89, and Cys-92.

It belongs to the HypA/HybF family.

Involved in the maturation of [NiFe] hydrogenases. Required for nickel insertion into the metal center of the hydrogenase. The sequence is that of Hydrogenase maturation factor HypA from Picosynechococcus sp. (strain ATCC 27264 / PCC 7002 / PR-6) (Agmenellum quadruplicatum).